The sequence spans 299 residues: 4-hydroxy-3-methylbut-2-enyl diphosphate reductase (299 aa).

Cys-12 contacts [4Fe-4S] cluster. (2E)-4-hydroxy-3-methylbut-2-enyl diphosphate is bound by residues His-42 and His-88. 2 residues coordinate dimethylallyl diphosphate: His-42 and His-88. Positions 42 and 88 each coordinate isopentenyl diphosphate. Cys-110 is a [4Fe-4S] cluster binding site. His-138 serves as a coordination point for (2E)-4-hydroxy-3-methylbut-2-enyl diphosphate. Residue His-138 coordinates dimethylallyl diphosphate. His-138 is an isopentenyl diphosphate binding site. Glu-140 acts as the Proton donor in catalysis. Thr-177 provides a ligand contact to (2E)-4-hydroxy-3-methylbut-2-enyl diphosphate. Residue Cys-205 participates in [4Fe-4S] cluster binding. Ser-233, Asn-235, and Ser-277 together coordinate (2E)-4-hydroxy-3-methylbut-2-enyl diphosphate. Dimethylallyl diphosphate is bound by residues Ser-233, Asn-235, and Ser-277. Isopentenyl diphosphate contacts are provided by Ser-233, Asn-235, and Ser-277.

The protein belongs to the IspH family. It depends on [4Fe-4S] cluster as a cofactor.

The catalysed reaction is isopentenyl diphosphate + 2 oxidized [2Fe-2S]-[ferredoxin] + H2O = (2E)-4-hydroxy-3-methylbut-2-enyl diphosphate + 2 reduced [2Fe-2S]-[ferredoxin] + 2 H(+). It carries out the reaction dimethylallyl diphosphate + 2 oxidized [2Fe-2S]-[ferredoxin] + H2O = (2E)-4-hydroxy-3-methylbut-2-enyl diphosphate + 2 reduced [2Fe-2S]-[ferredoxin] + 2 H(+). It participates in isoprenoid biosynthesis; dimethylallyl diphosphate biosynthesis; dimethylallyl diphosphate from (2E)-4-hydroxy-3-methylbutenyl diphosphate: step 1/1. Its pathway is isoprenoid biosynthesis; isopentenyl diphosphate biosynthesis via DXP pathway; isopentenyl diphosphate from 1-deoxy-D-xylulose 5-phosphate: step 6/6. Catalyzes the conversion of 1-hydroxy-2-methyl-2-(E)-butenyl 4-diphosphate (HMBPP) into a mixture of isopentenyl diphosphate (IPP) and dimethylallyl diphosphate (DMAPP). Acts in the terminal step of the DOXP/MEP pathway for isoprenoid precursor biosynthesis. The chain is 4-hydroxy-3-methylbut-2-enyl diphosphate reductase from Malacoplasma penetrans (strain HF-2) (Mycoplasma penetrans).